The chain runs to 350 residues: Probable flap endonuclease 1 homolog (350 aa).

The segment at Met-1–Thr-95 is N-domain. Asp-34 lines the Mg(2+) pocket. Arg-61 is a binding site for DNA. Residues Asp-77, Glu-130, Glu-132, Asp-151, and Asp-153 each coordinate Mg(2+). The I-domain stretch occupies residues Asn-110 to His-223. Residue Glu-130 participates in DNA binding. Positions 201 and 203 each coordinate DNA. Asp-203 contributes to the Mg(2+) binding site. Positions Arg-317–Phe-325 are interaction with PCNA.

Belongs to the XPG/RAD2 endonuclease family. FEN1 subfamily. Interacts with PCNA. Three molecules of fen1 bind to one PCNA trimer with each molecule binding to one PCNA monomer. PCNA stimulates the nuclease activity without altering cleavage specificity. Mg(2+) serves as cofactor. Phosphorylated. Phosphorylation upon DNA damage induces relocalization to the nuclear plasma.

The protein localises to the nucleus. It localises to the nucleolus. The protein resides in the nucleoplasm. Its subcellular location is the mitochondrion. Structure-specific nuclease with 5'-flap endonuclease and 5'-3' exonuclease activities involved in DNA replication and repair. During DNA replication, cleaves the 5'-overhanging flap structure that is generated by displacement synthesis when DNA polymerase encounters the 5'-end of a downstream Okazaki fragment. It enters the flap from the 5'-end and then tracks to cleave the flap base, leaving a nick for ligation. Also involved in the long patch base excision repair (LP-BER) pathway, by cleaving within the apurinic/apyrimidinic (AP) site-terminated flap. Acts as a genome stabilization factor that prevents flaps from equilibrating into structures that lead to duplications and deletions. Also possesses 5'-3' exonuclease activity on nicked or gapped double-stranded DNA, and exhibits RNase H activity. Also involved in replication and repair of rDNA and in repairing mitochondrial DNA. This chain is Probable flap endonuclease 1 homolog, found in Danio rerio (Zebrafish).